A 697-amino-acid polypeptide reads, in one-letter code: Elongation factor G 2 (697 aa).

Residues 5–280 form the tr-type G domain; that stretch reads SKYRNIGIFA…AVVDYLPAPN (276 aa). GTP contacts are provided by residues 14–21, 78–82, and 132–135; these read AHVDAGKT, DTPGH, and NKLD.

This sequence belongs to the TRAFAC class translation factor GTPase superfamily. Classic translation factor GTPase family. EF-G/EF-2 subfamily.

Its subcellular location is the cytoplasm. In terms of biological role, catalyzes the GTP-dependent ribosomal translocation step during translation elongation. During this step, the ribosome changes from the pre-translocational (PRE) to the post-translocational (POST) state as the newly formed A-site-bound peptidyl-tRNA and P-site-bound deacylated tRNA move to the P and E sites, respectively. Catalyzes the coordinated movement of the two tRNA molecules, the mRNA and conformational changes in the ribosome. The chain is Elongation factor G 2 from Shewanella sp. (strain MR-4).